Reading from the N-terminus, the 161-residue chain is Extracellular giant hemoglobin major globin subunit B1 (161 aa).

The signal sequence occupies residues 1 to 16 (MTILVLFLSCAALASA). Positions 18–161 (CCSRGDAEVV…YIAAGIGAGL (144 aa)) constitute a Globin domain. Cysteines 19 and 149 form a disulfide. Histidine 112 contacts heme b.

This sequence belongs to the globin family. The 400 kDa hemoglobin consists of a spherical 24-mer arranged as a double layer of dome-shaped dodecamers. Each dodecamer is composed of the 3-fold trimer of the tetramer A1-A2-B1-B2 having one intra-tetramer (A1-B2) disulfide bond and one inter-tetramer (B1-B2) disulfide bond per tetramer.

The protein resides in the secreted. Its function is as follows. The extracellular giant hemoglobin is able to bind and transport oxygen and sulfide simultaneously and reversibly at two different sites. The chain is Extracellular giant hemoglobin major globin subunit B1 (ghbB1) from Oligobrachia mashikoi (Beard worm).